The chain runs to 184 residues: U3 small nucleolar ribonucleoprotein protein IMP3 (184 aa).

In terms of domain architecture, S4 RNA-binding spans 109 to 175 (RRLPTVLLKL…IKRHVLEYNE (67 aa)).

Belongs to the universal ribosomal protein uS4 family. In terms of assembly, part of the small subunit (SSU) processome, composed of more than 70 proteins and the RNA chaperone small nucleolar RNA (snoRNA) U3. Component of a heterotrimeric complex containing IMP3, IMP4 and MPHOSPH10. Interacts with MPHOSPH10.

It is found in the nucleus. It localises to the nucleolus. Component of the 60-80S U3 small nucleolar ribonucleoprotein (U3 snoRNP). Required for the early cleavages during pre-18S ribosomal RNA processing. Part of the small subunit (SSU) processome, first precursor of the small eukaryotic ribosomal subunit. During the assembly of the SSU processome in the nucleolus, many ribosome biogenesis factors, an RNA chaperone and ribosomal proteins associate with the nascent pre-rRNA and work in concert to generate RNA folding, modifications, rearrangements and cleavage as well as targeted degradation of pre-ribosomal RNA by the RNA exosome. The protein is U3 small nucleolar ribonucleoprotein protein IMP3 of Homo sapiens (Human).